A 71-amino-acid polypeptide reads, in one-letter code: Protein SlyX homolog (71 aa).

This sequence belongs to the SlyX family.

This is Protein SlyX homolog from Azotobacter vinelandii (strain DJ / ATCC BAA-1303).